The primary structure comprises 264 residues: AA9 family lytic polysaccharide monooxygenase A (264 aa).

The signal sequence occupies residues 1–18 (MHFAALAILSSLVASAAA). Cu(2+) is bound at residue H19. N-linked (GlcNAc...) asparagine glycans are attached at residues N51 and N75. The cysteines at positions 59 and 182 are disulfide-linked. Position 96 (H96) interacts with Cu(2+). Residue N110 is glycosylated (N-linked (GlcNAc...) asparagine). Position 162 (H162) interacts with O2. A Cu(2+)-binding site is contributed by Y179. N218 and N251 each carry an N-linked (GlcNAc...) asparagine glycan.

Belongs to the polysaccharide monooxygenase AA9 family. Cu(2+) serves as cofactor.

Its subcellular location is the secreted. The catalysed reaction is [(1-&gt;4)-beta-D-glucosyl]n+m + reduced acceptor + O2 = 4-dehydro-beta-D-glucosyl-[(1-&gt;4)-beta-D-glucosyl]n-1 + [(1-&gt;4)-beta-D-glucosyl]m + acceptor + H2O.. Functionally, lytic polysaccharide monooxygenase (LPMO) that depolymerizes crystalline and amorphous polysaccharides via the oxidation of scissile alpha- or beta-(1-4)-glycosidic bonds, yielding C4 oxidation products. Catalysis by LPMOs requires the reduction of the active-site copper from Cu(II) to Cu(I) by a reducing agent and H(2)O(2) or O(2) as a cosubstrate. Active on cellulose and cello-oligosaccharides, as well as plant cell wall-derived hemicellulosic polysaccharides. Also active on cello-oligosaccharides such as cellohexaose, cellopentaose or cellotetraose. In Phanerochaete carnosa (strain HHB-10118-sp) (White-rot fungus), this protein is AA9 family lytic polysaccharide monooxygenase A.